Here is a 408-residue protein sequence, read N- to C-terminus: Cytochrome bc1 complex Rieske iron-sulfur subunit (408 aa).

A run of 3 helical transmembrane segments spans residues 56–76, 98–118, and 162–182; these read VTFW…TYIF, MLGI…VLYV, and LIMG…IAPM. Residues 293 to 390 enclose the Rieske domain; that stretch reads HGPRNAVMLI…ITVDEEGYLI (98 aa). [2Fe-2S] cluster-binding residues include Cys333, His335, Cys352, and His355. Cys338 and Cys354 are disulfide-bonded.

This sequence belongs to the Rieske iron-sulfur protein family. In terms of assembly, the cytochrome bc1 complex is composed of a cytochrome b (QcrB), the Rieske iron-sulfur protein (QcrA) and a diheme cytochrome c (QcrC) subunit. The bc1 complex forms a supercomplex with cytochrome c oxidase (cytochrome aa3). It depends on [2Fe-2S] cluster as a cofactor.

It localises to the cell membrane. Its function is as follows. Iron-sulfur subunit of the cytochrome bc1 complex, an essential component of the respiratory electron transport chain required for ATP synthesis. The bc1 complex catalyzes the oxidation of menaquinol and the reduction of cytochrome c in the respiratory chain. The bc1 complex operates through a Q-cycle mechanism that couples electron transfer to generation of the proton gradient that drives ATP synthesis. This Corynebacterium glutamicum (strain ATCC 13032 / DSM 20300 / JCM 1318 / BCRC 11384 / CCUG 27702 / LMG 3730 / NBRC 12168 / NCIMB 10025 / NRRL B-2784 / 534) protein is Cytochrome bc1 complex Rieske iron-sulfur subunit (qcrA).